We begin with the raw amino-acid sequence, 788 residues long: Probable phosphoketolase 1 (788 aa).

The protein belongs to the XFP family. Thiamine diphosphate is required as a cofactor.

The polypeptide is Probable phosphoketolase 1 (Lactiplantibacillus plantarum (strain ATCC BAA-793 / NCIMB 8826 / WCFS1) (Lactobacillus plantarum)).